We begin with the raw amino-acid sequence, 785 residues long: Endonuclease MutS2 (785 aa).

332-339 (GPNTGGKT) contributes to the ATP binding site. The region spanning 710–785 (IDLRGLDAEE…GDGATIVELK (76 aa)) is the Smr domain.

It belongs to the DNA mismatch repair MutS family. MutS2 subfamily. Homodimer. Binds to stalled ribosomes, contacting rRNA.

Endonuclease that is involved in the suppression of homologous recombination and thus may have a key role in the control of bacterial genetic diversity. Functionally, acts as a ribosome collision sensor, splitting the ribosome into its 2 subunits. Detects stalled/collided 70S ribosomes which it binds and splits by an ATP-hydrolysis driven conformational change. Acts upstream of the ribosome quality control system (RQC), a ribosome-associated complex that mediates the extraction of incompletely synthesized nascent chains from stalled ribosomes and their subsequent degradation. Probably generates substrates for RQC. This chain is Endonuclease MutS2, found in Clostridium botulinum (strain Eklund 17B / Type B).